The primary structure comprises 230 residues: ATP synthase subunit a (230 aa).

The next 5 membrane-spanning stretches (helical) occupy residues 17–37 (LPIT…FIMA), 78–98 (IFPF…IGVI), 107–127 (DLSV…WFGI), 165–187 (LFGN…GFLV), and 198–218 (EAII…AGGI).

This sequence belongs to the ATPase A chain family. In terms of assembly, F-type ATPases have 2 components, CF(1) - the catalytic core - and CF(0) - the membrane proton channel. CF(1) has five subunits: alpha(3), beta(3), gamma(1), delta(1), epsilon(1). CF(0) has three main subunits: a(1), b(2) and c(9-12). The alpha and beta chains form an alternating ring which encloses part of the gamma chain. CF(1) is attached to CF(0) by a central stalk formed by the gamma and epsilon chains, while a peripheral stalk is formed by the delta and b chains.

It localises to the cell inner membrane. In terms of biological role, key component of the proton channel; it plays a direct role in the translocation of protons across the membrane. The chain is ATP synthase subunit a from Legionella pneumophila (strain Paris).